The following is a 388-amino-acid chain: Mannitol-1-phosphate 5-dehydrogenase (388 aa).

Residue 5 to 16 participates in NAD(+) binding; sequence AIQFGGGNIGRG. The active site involves K213.

It belongs to the mannitol dehydrogenase family. In terms of assembly, monomer.

The enzyme catalyses D-mannitol 1-phosphate + NAD(+) = beta-D-fructose 6-phosphate + NADH + H(+). Functionally, catalyzes the NAD(H)-dependent interconversion of D-fructose 6-phosphate and D-mannitol 1-phosphate in the mannitol metabolic pathway. Has a strong preference for NADH over NADPH. Required for protection of conidiospores against exogenous stresses such as high temperatures and an oxidative environment. The protein is Mannitol-1-phosphate 5-dehydrogenase (mpdA) of Aspergillus niger.